The following is a 271-amino-acid chain: Beta-lactamase (271 aa).

The active-site Acyl-ester intermediate is the Ser-46. Residue Lys-210–Gly-212 participates in substrate binding.

The protein belongs to the class-A beta-lactamase family. Monomer.

The catalysed reaction is a beta-lactam + H2O = a substituted beta-amino acid. In terms of biological role, hydrolyzes broad-spectrum beta-lactam antibiotics. Active against cephalosporins. This is Beta-lactamase from Proteus vulgaris.